The sequence spans 600 residues: Rhesus-like glycoprotein B (600 aa).

Over 1–16 (MSKDEHKLPLSKRKES) the chain is Cytoplasmic. The helical transmembrane segment at 17–37 (IIFMMILFAFQVFMVVLFSVW) threads the bilayer. Over 38-73 (VRYSKNEVNYSTLTPEQLQELEATGGVVQEEVTNIY) the chain is Extracellular. N-linked (GlcNAc...) asparagine glycosylation is present at Asn46. The helical transmembrane segment at 74 to 94 (GYFRDINIMIFFGFGFLMTFL) threads the bilayer. The Cytoplasmic segment spans residues 95 to 102 (RRYGYSAL). A helical membrane pass occupies residues 103 to 123 (GYTFIISALVAQWSVLIYGFF). Residues 124–145 (ETVDHKNDHGGDYASTFEMSQT) are Extracellular-facing. Residues 146–166 (VLLQGLFCAGAVMISYGAVLG) traverse the membrane as a helical segment. Topologically, residues 167 to 170 (RVTP) are cytoplasmic. Residues 171–191 (LQMLVVGIFEPIFYFLNMFIG) traverse the membrane as a helical segment. Residues 192 to 199 (EMNLEAID) are Extracellular-facing. Residues 200–220 (VGGGMYIHLFGSVFGLTIAWF) form a helical membrane-spanning segment. Over 221-240 (LTDKKSKDCEDNSPSYTGDY) the chain is Cytoplasmic. A helical membrane pass occupies residues 241–261 (FAMAGTLFLWMMWPSFNAAIA). Over 262–274 (PLGEPQFRAIANT) the chain is Extracellular. The helical transmembrane segment at 275 to 295 (FLSLTASTIATFIVTRLFGHL) threads the bilayer. The Cytoplasmic segment spans residues 296 to 303 (GHKIDMVH). The chain crosses the membrane as a helical span at residues 304–323 (VQNSSLAGGVVQGCLAHMNI). Topologically, residues 324 to 325 (NP) are extracellular. Residues 326–346 (GGAIGMGFLAGVISVIGYLFI) traverse the membrane as a helical segment. At 347 to 361 (SPFLQRRFNIQDTCG) the chain is on the cytoplasmic side. The helical transmembrane segment at 362-382 (IHNLHFMPGFIGSIAACIAAW) threads the bilayer. Over 383–411 (KGLNDRSLYNPIEFNQIFRAGEDQARNNA) the chain is Extracellular. The helical transmembrane segment at 412-432 (AATFISIGIAIAGGLFVGMIL) threads the bilayer. Residues 433–600 (KALKKVGGLK…SSTNSPTSKV (168 aa)) lie on the Cytoplasmic side of the membrane. The disordered stretch occupies residues 471–600 (NLPMPTTDNG…SSTNSPTSKV (130 aa)). The segment covering 498–510 (NKKENGYRRDLIR) has biased composition (basic and acidic residues). Positions 519-529 (EQSTDSSYSDS) are enriched in low complexity. Over residues 540–554 (RIRKLAKKSYRRSKK) the composition is skewed to basic residues. Residues 555-566 (SHSEHQPQHQPE) show a composition bias toward basic and acidic residues. Low complexity predominate over residues 571 to 580 (NNNNNNNNNN). Residues 581-600 (ATAETTDNGGSSTNSPTSKV) are compositionally biased toward polar residues.

Belongs to the ammonium transporter (TC 2.A.49) family. Rh subfamily.

It localises to the membrane. In terms of biological role, may be a carbon dioxide/bicarbonate transporter. The chain is Rhesus-like glycoprotein B (rhgB) from Dictyostelium discoideum (Social amoeba).